A 143-amino-acid chain; its full sequence is Large ribosomal subunit protein uL13 (143 aa).

Belongs to the universal ribosomal protein uL13 family. Part of the 50S ribosomal subunit.

Functionally, this protein is one of the early assembly proteins of the 50S ribosomal subunit, although it is not seen to bind rRNA by itself. It is important during the early stages of 50S assembly. This chain is Large ribosomal subunit protein uL13, found in Albidiferax ferrireducens (strain ATCC BAA-621 / DSM 15236 / T118) (Rhodoferax ferrireducens).